Here is a 1472-residue protein sequence, read N- to C-terminus: Gag-Pol polyprotein (1472 aa).

G2 carries the N-myristoyl glycine; by host lipid modification. A Nuclear export signal motif is present at residues 16–22; it reads FEKIRLR. Residues 26-32 carry the Nuclear localization signal motif; sequence KKKYQIK. Disordered stretches follow at residues 115 to 135 and 215 to 234; these read EKAA…SRNY and DRTH…RDPT. Y135 carries the post-translational modification Phosphotyrosine; by host. CCHC-type zinc fingers lie at residues 390-407 and 411-428; these read LKCF…ECKA and IKCF…DCKN. Positions 454-500 are disordered; that stretch reads HSWSGTNSPPNGNSLRSSKEAPPAVCREGTAPERGERTDKETEGERS. Positions 456-469 are enriched in polar residues; the sequence is WSGTNSPPNGNSLR. The segment covering 483-499 has biased composition (basic and acidic residues); that stretch reads TAPERGERTDKETEGER. The region spanning 524-597 is the Peptidase A2 domain; that stretch reads VQALLDTGAD…TPINIIGRNI (74 aa). Residue D529 is the For protease activity; shared with dimeric partner of the active site. Residues 653–843 enclose the Reverse transcriptase domain; that stretch reads EGKLSRIGGE…PPWEWMGYKL (191 aa). Mg(2+) is bound by residues D719, D794, and D795. The tract at residues 836–844 is RT 'primer grip'; sequence WEWMGYKLH. Residues 1007–1023 carry the Tryptophan repeat motif motif; it reads WDMWWQDYWQVSWIPEW. The region spanning 1043-1166 is the RNase H type-1 domain; it reads IKGEDVYYVD…IDKLVSKGIR (124 aa). Residues D1052, E1087, D1107, and D1158 each contribute to the Mg(2+) site. The Integrase-type zinc-finger motif lies at 1172-1213; the sequence is DRIEEAQDDHAKYHNNWRSMVQEFGLPNIVAKEIVAACPKCQ. 4 residues coordinate Zn(2+): H1181, H1185, C1209, and C1212. The region spanning 1223–1373 is the Integrase catalytic domain; the sequence is VDASIETWQM…SSAERLVNML (151 aa). D1233 and D1285 together coordinate Mg(2+). Positions 1392–1439 form a DNA-binding region, integrase-type; that stretch reads FKVYYREGRDPVWKGPARLIWKGEGAVVIKEGEDIKVVPRRKAKIIKD. Residues 1440-1472 form a disordered region; the sequence is YGERKTMDSEGSMEGVREANKQMEGDSDLQDQE. A compositionally biased stretch (basic and acidic residues) spans 1454-1463; it reads GVREANKQME.

Homotrimer. Interacts with gp41 (via C-terminus). In terms of assembly, homodimer. The active site consists of two apposed aspartic acid residues. As to quaternary structure, heterodimer of p66 RT and p51 RT (RT p66/p51). Heterodimerization of RT is essential for DNA polymerase activity. Despite the sequence identities, p66 RT and p51 RT have distinct folding. Homotetramer; may further associate as a homohexadecamer. Mg(2+) serves as cofactor. Specific enzymatic cleavages by the viral protease yield mature proteins. The protease is released by autocatalytic cleavage. The polyprotein is cleaved during and after budding, this process is termed maturation. Proteolytic cleavage of p66 RT removes the RNase H domain to yield the p51 RT subunit. Post-translationally, capsid protein p24 is phosphorylated.

The protein resides in the virion. It localises to the host nucleus. Its subcellular location is the host cytoplasm. It is found in the host cell membrane. The catalysed reaction is Specific for a P1 residue that is hydrophobic, and P1' variable, but often Pro.. It carries out the reaction Endohydrolysis of RNA in RNA/DNA hybrids. Three different cleavage modes: 1. sequence-specific internal cleavage of RNA. Human immunodeficiency virus type 1 and Moloney murine leukemia virus enzymes prefer to cleave the RNA strand one nucleotide away from the RNA-DNA junction. 2. RNA 5'-end directed cleavage 13-19 nucleotides from the RNA end. 3. DNA 3'-end directed cleavage 15-20 nucleotides away from the primer terminus.. It catalyses the reaction 3'-end directed exonucleolytic cleavage of viral RNA-DNA hybrid.. The enzyme catalyses DNA(n) + a 2'-deoxyribonucleoside 5'-triphosphate = DNA(n+1) + diphosphate. Its activity is regulated as follows. The viral protease is inhibited by many synthetic protease inhibitors (PIs), such as amprenavir, atazanavir, indinavir, loprinavir, nelfinavir, ritonavir and saquinavir. RT can be inhibited either by nucleoside RT inhibitors (NRTIs) or by non nucleoside RT inhibitors (NNRTIs). NRTIs act as chain terminators, whereas NNRTIs inhibit DNA polymerization by binding a small hydrophobic pocket near the RT active site and inducing an allosteric change in this region. Classical NRTIs are abacavir, adefovir (PMEA), didanosine (ddI), lamivudine (3TC), stavudine (d4T), tenofovir (PMPA), zalcitabine (ddC), and zidovudine (AZT). Classical NNRTIs are atevirdine (BHAP U-87201E), delavirdine, efavirenz (DMP-266), emivirine (I-EBU), and nevirapine (BI-RG-587). The tritherapies used as a basic effective treatment of AIDS associate two NRTIs and one NNRTI. Use of protease inhibitors in tritherapy regimens permit more ambitious therapeutic strategies. In terms of biological role, gag-Pol polyprotein and Gag polyprotein may regulate their own translation, by the binding genomic RNA in the 5'-UTR. At low concentration, Gag-Pol and Gag would promote translation, whereas at high concentration, the polyproteins encapsidate genomic RNA and then shut off translation. Functionally, matrix protein p17 has two main functions: in infected cell, it targets Gag and Gag-pol polyproteins to the plasma membrane via a multipartite membrane-binding signal, that includes its myristointegration complex. The myristoylation signal and the NLS exert conflicting influences its subcellular localization. The key regulation of these motifs might be phosphorylation of a portion of MA molecules on the C-terminal tyrosine at the time of virus maturation, by virion-associated cellular tyrosine kinase. Implicated in the release from host cell mediated by Vpu. Its function is as follows. Capsid protein p24 forms the conical core that encapsulates the genomic RNA-nucleocapsid complex in the virion. The core is constituted by capsid protein hexamer subunits. The core is disassembled soon after virion entry. Interaction with host PPIA/CYPA protects the virus from restriction by host TRIM5-alpha and from an unknown antiviral activity in host cells. This capsid restriction by TRIM5 is one of the factors which restricts SIV to the simian species. Nucleocapsid protein p7 encapsulates and protects viral dimeric unspliced (genomic) RNA. Binds these RNAs through its zinc fingers. Facilitates rearangement of nucleic acid secondary structure during retrotranscription of genomic RNA. This capability is referred to as nucleic acid chaperone activity. In terms of biological role, the aspartyl protease mediates proteolytic cleavages of Gag and Gag-Pol polyproteins during or shortly after the release of the virion from the plasma membrane. Cleavages take place as an ordered, step-wise cascade to yield mature proteins. This process is called maturation. Displays maximal activity during the budding process just prior to particle release from the cell. Also cleaves Nef and Vif, probably concomitantly with viral structural proteins on maturation of virus particles. Hydrolyzes host EIF4GI and PABP1 in order to shut off the capped cellular mRNA translation. The resulting inhibition of cellular protein synthesis serves to ensure maximal viral gene expression and to evade host immune response. Functionally, reverse transcriptase/ribonuclease H (RT) is a multifunctional enzyme that converts the viral dimeric RNA genome into dsDNA in the cytoplasm, shortly after virus entry into the cell. This enzyme displays a DNA polymerase activity that can copy either DNA or RNA templates, and a ribonuclease H (RNase H) activity that cleaves the RNA strand of RNA-DNA heteroduplexes in a partially processive 3' to 5' endonucleasic mode. Conversion of viral genomic RNA into dsDNA requires many steps. A tRNA binds to the primer-binding site (PBS) situated at the 5'-end of the viral RNA. RT uses the 3' end of the tRNA primer to perform a short round of RNA-dependent minus-strand DNA synthesis. The reading proceeds through the U5 region and ends after the repeated (R) region which is present at both ends of viral RNA. The portion of the RNA-DNA heteroduplex is digested by the RNase H, resulting in a ssDNA product attached to the tRNA primer. This ssDNA/tRNA hybridizes with the identical R region situated at the 3' end of viral RNA. This template exchange, known as minus-strand DNA strong stop transfer, can be either intra- or intermolecular. RT uses the 3' end of this newly synthesized short ssDNA to perform the RNA-dependent minus-strand DNA synthesis of the whole template. RNase H digests the RNA template except for two polypurine tracts (PPTs) situated at the 5'-end and near the center of the genome. It is not clear if both polymerase and RNase H activities are simultaneous. RNase H can probably proceed both in a polymerase-dependent (RNA cut into small fragments by the same RT performing DNA synthesis) and a polymerase-independent mode (cleavage of remaining RNA fragments by free RTs). Secondly, RT performs DNA-directed plus-strand DNA synthesis using the PPTs that have not been removed by RNase H as primers. PPTs and tRNA primers are then removed by RNase H. The 3' and 5' ssDNA PBS regions hybridize to form a circular dsDNA intermediate. Strand displacement synthesis by RT to the PBS and PPT ends produces a blunt ended, linear dsDNA copy of the viral genome that includes long terminal repeats (LTRs) at both ends. Its function is as follows. Integrase catalyzes viral DNA integration into the host chromosome, by performing a series of DNA cutting and joining reactions. This enzyme activity takes place after virion entry into a cell and reverse transcription of the RNA genome in dsDNA. The first step in the integration process is 3' processing. This step requires a complex comprising the viral genome, matrix protein, Vpr and integrase. This complex is called the pre-integration complex (PIC). The integrase protein removes 2 nucleotides from each 3' end of the viral DNA, leaving recessed CA OH's at the 3' ends. In the second step, the PIC enters cell nucleus. This process is mediated through integrase and Vpr proteins, and allows the virus to infect a non dividing cell. This ability to enter the nucleus is specific of lentiviruses, other retroviruses cannot and rely on cell division to access cell chromosomes. In the third step, termed strand transfer, the integrase protein joins the previously processed 3' ends to the 5' ends of strands of target cellular DNA at the site of integration. The 5'-ends are produced by integrase-catalyzed staggered cuts, 5 bp apart. A Y-shaped, gapped, recombination intermediate results, with the 5'-ends of the viral DNA strands and the 3' ends of target DNA strands remaining unjoined, flanking a gap of 5 bp. The last step is viral DNA integration into host chromosome. This involves host DNA repair synthesis in which the 5 bp gaps between the unjoined strands are filled in and then ligated. Since this process occurs at both cuts flanking the SIV genome, a 5 bp duplication of host DNA is produced at the ends of SIV integration. Alternatively, Integrase may catalyze the excision of viral DNA just after strand transfer, this is termed disintegration. The protein is Gag-Pol polyprotein (gag-pol) of Simian immunodeficiency virus agm.grivet (isolate AGM gr-1) (SIV-agm.gri).